Here is a 393-residue protein sequence, read N- to C-terminus: Phosphopentomutase (393 aa).

Mn(2+)-binding residues include D13, D286, H291, D327, H328, and H339.

It belongs to the phosphopentomutase family. Mn(2+) is required as a cofactor.

The protein resides in the cytoplasm. The enzyme catalyses 2-deoxy-alpha-D-ribose 1-phosphate = 2-deoxy-D-ribose 5-phosphate. It catalyses the reaction alpha-D-ribose 1-phosphate = D-ribose 5-phosphate. It functions in the pathway carbohydrate degradation; 2-deoxy-D-ribose 1-phosphate degradation; D-glyceraldehyde 3-phosphate and acetaldehyde from 2-deoxy-alpha-D-ribose 1-phosphate: step 1/2. Its function is as follows. Isomerase that catalyzes the conversion of deoxy-ribose 1-phosphate (dRib-1-P) and ribose 1-phosphate (Rib-1-P) to deoxy-ribose 5-phosphate (dRib-5-P) and ribose 5-phosphate (Rib-5-P), respectively. This is Phosphopentomutase from Symbiobacterium thermophilum (strain DSM 24528 / JCM 14929 / IAM 14863 / T).